Reading from the N-terminus, the 353-residue chain is MGGCVSTALKVGAETVAEGHIDLISFAINYFKNAVPYIVKYLGRQQRPKEVDMEATLTEAKESKGFQPWKISCQPKGAVRGLFIGVNYGNTEAQLSGCCHDIMMMIGALQKRNFPLTEVVILADEEDVPGRTGEPTRANILRYLAWLAQDAQPNDVLFFHYSGHGTRANARDDDCEEYDQCIVPMDYVENGCIVDNEIHEILVSQLPKGVRLTAVFDCSHSGSMLDLPYAYVCDSSKDGSGSCGMKRVREDNDVQADVLMISACADDEAALGVDNTQDFYESGKDSGGAATFCLTAMMMREEPLTFLDLLVHTREMLKSRGFTQVPHLSASKPINLMQRFSLEGLFPQERTLL.

A lipid anchor (N-myristoyl glycine) is attached at Gly-2.

This sequence belongs to the peptidase C14B family. Palmitoylated. Post-translationally, proteolytic cleavage by MCA3 occurs prior or during secretion and requires MCA4 membrane localization. Cleavage is dispensable for secretion and parasite growth and virulence in the mammalian host. In vitro, can be cleaved by MCA2 but specifically cleaved by MCA3 in vivo.

It is found in the cell projection. Its subcellular location is the cilium. The protein localises to the flagellum membrane. The protein resides in the secreted. In terms of biological role, inactive metacaspase which plays a role in parasite bloodstream form growth and in parasite virulence within the mammalian host. The sequence is that of Inactive metacaspase-4 from Trypanosoma brucei brucei.